The sequence spans 83 residues: Sec-independent protein translocase protein TatA (83 aa).

A helical transmembrane segment spans residues 1 to 21 (MGSFSIWHWLIVLLIVVMVFG). Residues 44–83 (KDGGQSAAATDDKPAAPAGQVTNAQASDKTTIDVEARQKS) form a disordered region. Positions 63 to 72 (QVTNAQASDK) are enriched in polar residues. Basic and acidic residues predominate over residues 73–83 (TTIDVEARQKS).

The protein belongs to the TatA/E family. The Tat system comprises two distinct complexes: a TatABC complex, containing multiple copies of TatA, TatB and TatC subunits, and a separate TatA complex, containing only TatA subunits. Substrates initially bind to the TatABC complex, which probably triggers association of the separate TatA complex to form the active translocon.

It is found in the cell inner membrane. Part of the twin-arginine translocation (Tat) system that transports large folded proteins containing a characteristic twin-arginine motif in their signal peptide across membranes. TatA could form the protein-conducting channel of the Tat system. This Polaromonas sp. (strain JS666 / ATCC BAA-500) protein is Sec-independent protein translocase protein TatA.